The primary structure comprises 1425 residues: Neuropathy target esterase sws (1425 aa).

Over 1–34 (MDVLEMLRASASGSYNTIFSDAWCQYVSKQITAT) the chain is Lumenal. Residues 35-55 (VYMYFALVMMSLLFIAWFLYF) traverse the membrane as a helical segment. Residues 56 to 1425 (KRMARLRLRD…RSSPNNETKN (1370 aa)) lie on the Cytoplasmic side of the membrane. 174-301 (IFGHFEKPVF…IRVIQVIMIR (128 aa)) contacts a nucleoside 3',5'-cyclic phosphate. 2 stretches are compositionally biased toward polar residues: residues 332–348 (TMSG…SRQA) and 357–366 (SQMNLMQSAV). The interval 332-410 (TMSGPINSQT…NPDGSFHGTT (79 aa)) is disordered. Over residues 367–381 (SGTGSSGVSVTVTRP) the composition is skewed to low complexity. Ser-444 and Ser-453 each carry phosphoserine. A nucleoside 3',5'-cyclic phosphate is bound by residues 482–609 (ELGL…VVRR) and 598–727 (IVLD…HRFL). The PNPLA domain maps to 952-1118 (LVLGGGGARG…VNNLPADVMH (167 aa)). Positions 956–961 (GGGARG) match the GXGXXG motif. Positions 983–987 (GVSIG) match the GXSXG motif. Ser-985 (nucleophile) is an active-site residue. Residue Asp-1105 is the Proton acceptor of the active site. Residues 1105-1107 (DGG) carry the DGA/G motif. Ser-1160 carries the phosphoserine modification. Residues 1330–1425 (LERKTDKSTQ…RSSPNNETKN (96 aa)) are disordered. The span at 1337 to 1347 (STQSSPPSNSR) shows a compositional bias: low complexity. The segment covering 1348–1358 (SDMRGKEEARH) has biased composition (basic and acidic residues). Residues 1380–1403 (TKTQTGQEQELQQEQQDQGATAEQ) show a composition bias toward low complexity. The segment covering 1404–1416 (LVDKDKEENKENR) has biased composition (basic and acidic residues).

This sequence belongs to the NTE family. In terms of assembly, interacts with Pka-C3; interaction inhibits the catalytic function of Pka-C3 and the esterase activity of sws. Isoform A and isoform B are expressed in the entire brain cortex; cortical cell bodies of adult brain. Sws and Pka-C3 are colocalized in all neurons.

Its subcellular location is the endoplasmic reticulum membrane. The catalysed reaction is a 1-acyl-sn-glycero-3-phosphocholine + H2O = sn-glycerol 3-phosphocholine + a fatty acid + H(+). Functionally, phospholipase B that deacylates intracellular phosphatidylcholine (PtdCho), generating glycerophosphocholine (GroPtdCho). This deacylation occurs at both sn-2 and sn-1 positions of PtdCho. Its specific chemical modification by certain organophosphorus (OP) compounds leads to distal axonopathy. Plays a role in the signaling mechanism between neurons and glia that regulates glia wrapping during development of the adult brain. Essential for membrane lipid homeostasis and cell survival in both neurons and glia of the adult brain. The protein is Neuropathy target esterase sws (sws) of Drosophila melanogaster (Fruit fly).